Reading from the N-terminus, the 1080-residue chain is uncharacterized protein (1080 aa).

Residues 1–17 (MHKLLVIIAHIIVCAYA) form the signal peptide. Residues 18–1042 (DFTGFDNEAG…KSLDLEMIGK (1025 aa)) lie on the Extracellular side of the membrane. Residues asparagine 439, asparagine 664, and asparagine 875 are each glycosylated (N-linked (GlcNAc...) asparagine; by host). The chain crosses the membrane as a helical span at residues 1043-1063 (IILLIAFVIVFVILLTIGIIT). Topologically, residues 1064 to 1080 (LVKRHRETLPEDEYLLP) are cytoplasmic.

The protein resides in the host membrane. This is an uncharacterized protein from Ostreid herpesvirus 1 (isolate France) (OsHV-1).